Reading from the N-terminus, the 432-residue chain is Fibrinogen gamma chain (432 aa).

Positions 1–24 are cleaved as a signal peptide; sequence MGRIGTPVFLAFLSALTCSLQVHA. The Fibrinogen C-terminal domain maps to 169-412; sequence KISPITGKDC…MTTMKLLPMG (244 aa). A disulfide bridge connects residues cysteine 178 and cysteine 207. An N-linked (GlcNAc...) asparagine glycan is attached at asparagine 227. Positions 340, 342, 344, and 346 each coordinate Ca(2+). An intrachain disulfide couples cysteine 348 to cysteine 361. Positions 413 to 432 are disordered; it reads RDLSGHGGQQQSKGNSRGDN. Residues 421-432 are compositionally biased toward polar residues; it reads QQQSKGNSRGDN.

Heterohexamer; disulfide linked. Contains 2 sets of 3 non-identical chains (alpha, beta and gamma). The 2 heterotrimers are in head to head conformation with the N-termini in a small central domain. Conversion of fibrinogen to fibrin is triggered by thrombin, which cleaves fibrinopeptides A and B from alpha and beta chains, and thus exposes the N-terminal polymerization sites responsible for the formation of the soft clot. The soft clot is converted into the hard clot by factor XIIIA which catalyzes the epsilon-(gamma-glutamyl)lysine cross-linking between gamma chains (stronger) and between alpha chains (weaker) of different monomers.

It localises to the secreted. In terms of biological role, together with fibrinogen alpha (FGA) and fibrinogen beta (FGB), polymerizes to form an insoluble fibrin matrix. Has a major function in hemostasis as one of the primary components of blood clots. This Petromyzon marinus (Sea lamprey) protein is Fibrinogen gamma chain (FGG).